Here is a 159-residue protein sequence, read N- to C-terminus: V-type proton ATPase 16 kDa proteolipid subunit c (159 aa).

At 1–11 the chain is on the lumenal side; it reads MSEEGSPMYSP. A helical membrane pass occupies residues 12–32; sequence FFGVMGAASAMVFSALGAAYG. At 33-54 the chain is on the cytoplasmic side; sequence TAKSGVGISAMSVMRPELIMKC. A helical membrane pass occupies residues 55 to 75; the sequence is IIPVVMAGIIAIYGLVVAVLI. At 76-93 the chain is on the lumenal side; the sequence is AGKLDEAPTYTLYQGFVH. The chain crosses the membrane as a helical span at residues 94 to 114; that stretch reads MGAGLSVGLSGLAAGFAIGIV. Topologically, residues 115 to 132 are cytoplasmic; that stretch reads GDAGVRGTAQQPRLYVGM. Residues 133–153 form a helical membrane-spanning segment; sequence ILILIFAEVLGLYGLIVAIFL. At 154–159 the chain is on the lumenal side; sequence YTKTSS.

This sequence belongs to the V-ATPase proteolipid subunit family. In terms of assembly, V-ATPase is a heteromultimeric enzyme made up of two complexes: the ATP-hydrolytic V1 complex and the proton translocation V0 complex. The V1 complex consists of three catalytic AB heterodimers that form a heterohexamer, three peripheral stalks each consisting of EG heterodimers, one central rotor including subunits D and F, and the regulatory subunits C and H. The proton translocation complex V0 consists of the proton transport subunit a, a ring of proteolipid subunits c9c'', rotary subunit d, subunits e and f, and two accessory subunits.

Its subcellular location is the vacuole membrane. Its function is as follows. Proton-conducting pore forming subunit of the V0 complex of vacuolar(H+)-ATPase (V-ATPase), a multisubunit enzyme composed of a peripheral complex (V1) that hydrolyzes ATP and a membrane integral complex (V0) that translocates protons. V-ATPase is responsible for acidifying and maintaining the pH of intracellular compartments and in some cell types, is targeted to the plasma membrane, where it is responsible for acidifying the extracellular environment. This Nephrops norvegicus (Norway lobster) protein is V-type proton ATPase 16 kDa proteolipid subunit c.